Here is a 209-residue protein sequence, read N- to C-terminus: Ras-related protein Rab-2-A (209 aa).

A GTP-binding site is contributed by 13–21; it reads GDTGVGKSC. Positions 35–43 match the Effector region motif; it reads HDLTIGVEF. GTP contacts are provided by residues 61–65, 119–122, and 149–151; these read DTAGQ, NKCD, and SAK. 2 S-geranylgeranyl cysteine lipidation sites follow: Cys-207 and Cys-208.

The protein belongs to the small GTPase superfamily. Rab family.

It is found in the endoplasmic reticulum membrane. The protein localises to the golgi apparatus membrane. In terms of biological role, protein transport. Probably involved in vesicular traffic. This is Ras-related protein Rab-2-A (RAB2A) from Zea mays (Maize).